The primary structure comprises 185 residues: Photosystem I assembly protein Ycf4 (185 aa).

Helical transmembrane passes span 21–43 (NFCW…TSSY) and 63–85 (GLVM…CTIL).

This sequence belongs to the Ycf4 family.

The protein localises to the plastid. The protein resides in the chloroplast thylakoid membrane. In terms of biological role, seems to be required for the assembly of the photosystem I complex. The protein is Photosystem I assembly protein Ycf4 of Brassica oleracea (Wild cabbage).